Reading from the N-terminus, the 362-residue chain is Dihydroorotate dehydrogenase (quinone) (362 aa).

FMN contacts are provided by residues 62-66 and Thr86; that span reads AGYDK. Lys66 provides a ligand contact to substrate. Position 111 to 115 (111 to 115) interacts with substrate; that stretch reads NRLGF. FMN contacts are provided by Asn139 and Asn170. Position 170 (Asn170) interacts with substrate. The active-site Nucleophile is the Ser173. Position 175 (Asn175) interacts with substrate. 2 residues coordinate FMN: Lys215 and Ser243. 244 to 245 serves as a coordination point for substrate; that stretch reads NT. Residues Gly266, Gly295, and 316-317 each bind FMN; that span reads YS.

The protein belongs to the dihydroorotate dehydrogenase family. Type 2 subfamily. Monomer. Requires FMN as cofactor.

It localises to the cell membrane. It carries out the reaction (S)-dihydroorotate + a quinone = orotate + a quinol. It functions in the pathway pyrimidine metabolism; UMP biosynthesis via de novo pathway; orotate from (S)-dihydroorotate (quinone route): step 1/1. Its function is as follows. Catalyzes the conversion of dihydroorotate to orotate with quinone as electron acceptor. This chain is Dihydroorotate dehydrogenase (quinone), found in Rhizobium johnstonii (strain DSM 114642 / LMG 32736 / 3841) (Rhizobium leguminosarum bv. viciae).